Reading from the N-terminus, the 79-residue chain is Large ribosomal subunit protein bL31 (79 aa).

Belongs to the bacterial ribosomal protein bL31 family. Type A subfamily. Part of the 50S ribosomal subunit.

In terms of biological role, binds the 23S rRNA. The chain is Large ribosomal subunit protein bL31 from Nostoc sp. (strain PCC 7120 / SAG 25.82 / UTEX 2576).